The primary structure comprises 341 residues: MKKLISIIFIFVLGVVGSLTAAVSAEAASALNSGKVNPLADFSLKGFAALNGGTTGGEGGQTVTVTTGDQLIAALKNKNANTPLKIYVNGTITTSNTSASKIDVKDVSNVSIVGSGTKGELKGIGIKIWRANNIIIRNLKIHEVASGDKDAIGIEGPSKNIWVDHNELYHSLNVDKDYYDGLFDVKRDAEYITFSWNYVHDGWKSMLMGSSDSDNYNRTITFHHNWFENLNSRVPSFRFGEGHIYNNYFNKIIDSGINSRMGARIRIENNLFENAKDPIVSWYSSSPGYWHVSNNKFVNSRGSMPTTSTTTYNPPYSYSLDNVDNVKSIVKQNAGVGKINP.

A signal peptide spans 1–27 (MKKLISIIFIFVLGVVGSLTAAVSAEA). Residues 28–39 (ASALNSGKVNPL) constitute a propeptide that is removed on maturation. PbH1 repeat units lie at residues 131 to 156 (ANNI…GIEG) and 158 to 186 (SKNI…FDVK). Ca(2+) is bound by residues Asp-150, Asp-180, and Asp-184. Arg-233 is an active-site residue. 2 PbH1 repeats span residues 262–283 (GARI…VSWY) and 287–322 (PGYW…SLDN).

It belongs to the polysaccharide lyase 1 family. Ca(2+) serves as cofactor.

The protein resides in the secreted. The enzyme catalyses eliminative cleavage of unsaturated trigalacturonate as the major product from the reducing end of polygalacturonic acid/pectate.. Functionally, cleaves unsaturated oligo-galacturonides from pectin. The major product is trigalacturonate; digalacturonate and tetragalacturonate are also produced. Activity on methylated pectins decreases with an increasing degree of methylation. This is Pectate trisaccharide-lyase from Bacillus licheniformis (strain ATCC 14580 / DSM 13 / JCM 2505 / CCUG 7422 / NBRC 12200 / NCIMB 9375 / NCTC 10341 / NRRL NRS-1264 / Gibson 46).